Here is a 91-residue protein sequence, read N- to C-terminus: Sec-independent protein translocase protein TatA (91 aa).

Residues 1-21 traverse the membrane as a helical segment; the sequence is MGAMSPWHWAIVALVVIILFG. A disordered region spans residues 44-91; the sequence is KEMQNDNSTPAPTAQQSAPAELPVADTTTAPVTPPAPVQPQHTEPKSA. Low complexity predominate over residues 51-74; the sequence is STPAPTAQQSAPAELPVADTTTAP.

It belongs to the TatA/E family. As to quaternary structure, the Tat system comprises two distinct complexes: a TatABC complex, containing multiple copies of TatA, TatB and TatC subunits, and a separate TatA complex, containing only TatA subunits. Substrates initially bind to the TatABC complex, which probably triggers association of the separate TatA complex to form the active translocon.

It is found in the cell membrane. Part of the twin-arginine translocation (Tat) system that transports large folded proteins containing a characteristic twin-arginine motif in their signal peptide across membranes. TatA could form the protein-conducting channel of the Tat system. In Rhodococcus jostii (strain RHA1), this protein is Sec-independent protein translocase protein TatA.